A 353-amino-acid chain; its full sequence is N6-methyladenosine RNA demethylase ALKB1 (353 aa).

The Fe2OG dioxygenase domain occupies Ile-223–Arg-352. Fe cation is bound by residues His-241, Asp-243, and His-308. 2-oxoglutarate is bound at residue Arg-343.

The protein belongs to the alkB family. Fe(2+) is required as a cofactor.

The protein localises to the cytoplasm. Its subcellular location is the P-body. The enzyme catalyses an N(6)-methyladenosine in mRNA + 2-oxoglutarate + O2 = an adenosine in mRNA + formaldehyde + succinate + CO2. In terms of biological role, RNA demethylase that regulates the stability of mRNAs through an m(6)A-dependent manner. M6A is a modification present at internal sites of mRNAs and some non-coding RNAs and plays a role in mRNA stability and processing. Plays a role in pathogenicity towards plant host. The chain is N6-methyladenosine RNA demethylase ALKB1 from Pyricularia oryzae (strain 70-15 / ATCC MYA-4617 / FGSC 8958) (Rice blast fungus).